The sequence spans 591 residues: Trihelix transcription factor PTL (591 aa).

Residues 1 to 32 are disordered; sequence MDQDQHPQYGIPELRQLMKGGGRTTTTTPSTS. The Myb-like 1 domain maps to 118 to 177; sequence GRWPRQETLTLLEIRSRLDHKFKEANQKGPLWDEVSRIMSEEHGYQRSGKKCREKFENLY. Positions 380–410 are disordered; the sequence is CSSPEERTNGNNEIRNNSETQNENGSDQTMT. Positions 388 to 410 are enriched in polar residues; sequence NGNNEIRNNSETQNENGSDQTMT. The Myb-like 2 domain occupies 422–479; the sequence is WGEQEILKLMEIRTSMDSTFQEILGGCSDEFLWEEIAAKLIQLGFDQRSALLCKEKWE. Residues 491–551 form a disordered region; that stretch reads QINKKRKDNS…SNANANANVT (61 aa). The span at 515–534 shows a compositional bias: polar residues; that stretch reads IYNNRESGYNDNDPHQINEQ. Residues 535–551 are compositionally biased toward low complexity; that stretch reads GNVGSSTSNANANANVT.

In terms of assembly, interacts with KIN10. Confined to flowers, at low levels. Also present in 7-days-old seedlings. Barely detectable in other tissues such as young seedlings, roots, stems, leaves and siliques. Expressed in flower primordia, more precisely between newly arisen sepal primordia and also at the basal margins of developing sepals.

It is found in the nucleus. Its function is as follows. Transcription factor that prevents growth. Regulates perianth architecture in flower, mostly in the second whorl, probably by suppressing growth between initiating sepals, ensuring that they remain separate, and by modulating organ shapes. Required for the establishment of auxin flux. This Arabidopsis thaliana (Mouse-ear cress) protein is Trihelix transcription factor PTL (PTL).